A 514-amino-acid polypeptide reads, in one-letter code: Retron Vc95 probable ATPase (514 aa).

An ATP-binding motif is present at residues 92–99 (GNNGSGKS).

In terms of biological role, probable ATPase component of antiviral defense system retron Vc95, composed of a non-coding RNA (ncRNA), a reverse transcriptase (RT), this protein and a putative HNH endonuclease. Expression of retron Vc95 confers protection against bacteriophages T2, T4 and T6. At multiplicity of infection (MOI) of 0.02 cultures slow growth when infected with T4 but do not collapse, at MOI 2 cultures enter growth stasis. The sequence is that of Retron Vc95 probable ATPase from Vibrio cholerae serotype O1 biovar El Tor.